Here is a 199-residue protein sequence, read N- to C-terminus: Pyridoxal 5'-phosphate synthase subunit PdxT (199 aa).

L-glutamine is bound at residue 49 to 51; the sequence is GES. Cysteine 81 (nucleophile) is an active-site residue. L-glutamine-binding positions include arginine 110 and 139–140; that span reads IR. Catalysis depends on charge relay system residues histidine 175 and glutamate 177.

Belongs to the glutaminase PdxT/SNO family. In the presence of PdxS, forms a dodecamer of heterodimers. Only shows activity in the heterodimer.

The catalysed reaction is aldehydo-D-ribose 5-phosphate + D-glyceraldehyde 3-phosphate + L-glutamine = pyridoxal 5'-phosphate + L-glutamate + phosphate + 3 H2O + H(+). It catalyses the reaction L-glutamine + H2O = L-glutamate + NH4(+). The protein operates within cofactor biosynthesis; pyridoxal 5'-phosphate biosynthesis. Catalyzes the hydrolysis of glutamine to glutamate and ammonia as part of the biosynthesis of pyridoxal 5'-phosphate. The resulting ammonia molecule is channeled to the active site of PdxS. This is Pyridoxal 5'-phosphate synthase subunit PdxT from Frankia casuarinae (strain DSM 45818 / CECT 9043 / HFP020203 / CcI3).